Here is a 340-residue protein sequence, read N- to C-terminus: Glucan endo-1,3-beta-glucosidase (340 aa).

Residues 1–28 (MATKASLSIKGFALLVSVLVAVPTRVQS) form the signal peptide. The Proton donor role is filled by Glu122. The active-site Nucleophile is the Glu264.

The protein belongs to the glycosyl hydrolase 17 family. In terms of assembly, monomer. Expressed in fruit peel and pulp.

It carries out the reaction Hydrolysis of (1-&gt;3)-beta-D-glucosidic linkages in (1-&gt;3)-beta-D-glucans.. Possesses beta-1,3-endoglucanase activity in vitro. May play a role in fruit pulp softening process. Can cleave beta-1,6-branched glucans in vitro. This chain is Glucan endo-1,3-beta-glucosidase, found in Musa acuminata (Banana).